The sequence spans 78 residues: Large ribosomal subunit protein bL28 (78 aa).

Belongs to the bacterial ribosomal protein bL28 family.

The protein is Large ribosomal subunit protein bL28 of Prochlorococcus marinus (strain MIT 9515).